Consider the following 381-residue polypeptide: Chitin deacetylase 8 (381 aa).

The N-terminal stretch at 1–18 (MKRLSVLCSLLLVAAALG) is a signal peptide. Disulfide bonds link Cys27/Cys39 and Cys32/Cys37. Zn(2+) is bound by residues Asp63, His117, and His121. 5 disulfide bridges follow: Cys86/Cys335, Cys211/Cys216, Cys240/Cys246, Cys343/Cys365, and Cys348/Cys368. An N-linked (GlcNAc...) asparagine glycan is attached at Asn171.

The protein belongs to the carbohydrate esterase 4 (CE4) family. It depends on Zn(2+) as a cofactor. As to expression, strongly expressed in the midgut. Has little or no expression in other tissues tested.

The protein resides in the secreted. It carries out the reaction [(1-&gt;4)-N-acetyl-beta-D-glucosaminyl](n) + n H2O = chitosan + n acetate. In terms of biological role, hydrolyzes the N-acetamido groups of N-acetyl-D-glucosamine (GlcNAc) residues in chitin. Shows activity towards the chitinous oligomers GlcNAc(3), GlcNAc(4), GlcNAc(5) and GlcNAc(6), but not GlcNAc or GlcNAc(2). Requires the substrate to occupy subsites 0, +1, and +2 for optimum catalysis. The sequence is that of Chitin deacetylase 8 from Bombyx mori (Silk moth).